Here is a 160-residue protein sequence, read N- to C-terminus: M-phase phosphoprotein 6 (160 aa).

Glycyl lysine isopeptide (Lys-Gly) (interchain with G-Cter in SUMO2) cross-links involve residues Lys-37 and Lys-86. Ser-110 carries the phosphoserine modification. The short motif at 116–133 (RRYETLVGTIGKKFARKR) is the Nuclear localization signal element. Residue Lys-127 forms a Glycyl lysine isopeptide (Lys-Gly) (interchain with G-Cter in SUMO2) linkage. Thr-147 bears the Phosphothreonine mark. Residues Lys-150 and Lys-153 each participate in a glycyl lysine isopeptide (Lys-Gly) (interchain with G-Cter in SUMO2) cross-link.

Belongs to the MPP6 family. As to quaternary structure, associates with the RNA exosome complex, mediated by EXOSC3. Interacts with ARHGAP18. Interacts with exosome cofactors EXOSC10 and MTREX. In terms of processing, phosphorylated in M (mitotic) phase.

It is found in the nucleus. The protein resides in the nucleolus. Its subcellular location is the cytoplasm. Functionally, RNA-binding protein that associates with the RNA exosome complex. Involved in the 3'-processing of the 7S pre-RNA to the mature 5.8S rRNA and play a role in recruiting the RNA exosome complex to pre-rRNA; this function may include C1D. The chain is M-phase phosphoprotein 6 from Homo sapiens (Human).